The chain runs to 182 residues: Peptidyl-tRNA hydrolase (182 aa).

Tyr14 is a tRNA binding site. The active-site Proton acceptor is the His19. Phe64, Asn66, and Asn112 together coordinate tRNA.

It belongs to the PTH family. Monomer.

Its subcellular location is the cytoplasm. It catalyses the reaction an N-acyl-L-alpha-aminoacyl-tRNA + H2O = an N-acyl-L-amino acid + a tRNA + H(+). Its function is as follows. Hydrolyzes ribosome-free peptidyl-tRNAs (with 1 or more amino acids incorporated), which drop off the ribosome during protein synthesis, or as a result of ribosome stalling. Functionally, catalyzes the release of premature peptidyl moieties from peptidyl-tRNA molecules trapped in stalled 50S ribosomal subunits, and thus maintains levels of free tRNAs and 50S ribosomes. The protein is Peptidyl-tRNA hydrolase of Wolbachia sp. subsp. Drosophila simulans (strain wRi).